Here is a 335-residue protein sequence, read N- to C-terminus: NADH-quinone oxidoreductase subunit H (335 aa).

8 consecutive transmembrane segments (helical) span residues 11 to 31 (VILT…AGAL), 81 to 101 (VIFT…FAII), 114 to 134 (IGLL…LFAG), 154 to 174 (VSYE…VGSF), 187 to 207 (LWFI…GVAV), 238 to 258 (FFVG…TLFF), 270 to 290 (QLSF…FILL), and 307 to 327 (WKFC…IVLW).

This sequence belongs to the complex I subunit 1 family. As to quaternary structure, NDH-1 is composed of 13 different subunits. Subunits NuoA, H, J, K, L, M, N constitute the membrane sector of the complex.

It is found in the cell inner membrane. The catalysed reaction is a quinone + NADH + 5 H(+)(in) = a quinol + NAD(+) + 4 H(+)(out). In terms of biological role, NDH-1 shuttles electrons from NADH, via FMN and iron-sulfur (Fe-S) centers, to quinones in the respiratory chain. The immediate electron acceptor for the enzyme in this species is believed to be ubiquinone. Couples the redox reaction to proton translocation (for every two electrons transferred, four hydrogen ions are translocated across the cytoplasmic membrane), and thus conserves the redox energy in a proton gradient. This subunit may bind ubiquinone. This is NADH-quinone oxidoreductase subunit H from Pseudomonas fluorescens (strain Pf0-1).